The following is a 1287-amino-acid chain: Vacuolating cytotoxin autotransporter (1287 aa).

The N-terminal stretch at 1 to 33 (MEIQQTHRKINRPLVSLALVGALVSITPQQSHA) is a signal peptide. The tract at residues 326–381 (PPEGGYKDKPNNTPSQSGAKNDKQESSQNNSNTQVINPPNSTQKTEVQPTQVIDGP) is disordered. Residues 351–376 (SSQNNSNTQVINPPNSTQKTEVQPTQ) show a composition bias toward polar residues. The Autotransporter domain maps to 1014 to 1287 (KYEKPTNVWA…ASNLGMRYSF (274 aa)).

It is found in the periplasm. It localises to the secreted. The protein resides in the cell surface. The protein localises to the cell outer membrane. Its function is as follows. Induces vacuolation of eukaryotic cells. Causes ulceration and gastric lesions. The polypeptide is Vacuolating cytotoxin autotransporter (vacA) (Helicobacter pylori (Campylobacter pylori)).